The primary structure comprises 499 residues: tRNA (guanine(37)-N(1))-methyltransferase (499 aa).

Residues 1-44 constitute a mitochondrion transit peptide; it reads MKIALPVFQKFNRLISSCKMSGVFPYNPPVNRQMRELDRSFFIT. Residues His268, 307–308, 335–336, and Asn399 contribute to the S-adenosyl-L-methionine site; these read DL and DG.

This sequence belongs to the class I-like SAM-binding methyltransferase superfamily. TRM5/TYW2 family. As to quaternary structure, monomer.

It localises to the mitochondrion matrix. The protein resides in the nucleus. It is found in the cytoplasm. It carries out the reaction guanosine(37) in tRNA + S-adenosyl-L-methionine = N(1)-methylguanosine(37) in tRNA + S-adenosyl-L-homocysteine + H(+). Functionally, specifically methylates the N1 position of guanosine-37 in various cytoplasmic and mitochondrial tRNAs. Methylation is not dependent on the nature of the nucleoside 5' of the target nucleoside. This is the first step in the biosynthesis of wybutosine (yW), a modified base adjacent to the anticodon of tRNAs and required for accurate decoding. Postspliced cytoplasmic tRNAs are imported into the nucleus, where this first step seems to take place, after which they are reexported to the cytoplasm, where the yW sythesis is completed by cytoplasmic enzymes. This Saccharomyces cerevisiae (strain ATCC 204508 / S288c) (Baker's yeast) protein is tRNA (guanine(37)-N(1))-methyltransferase.